A 546-amino-acid chain; its full sequence is Probable malate:quinone oxidoreductase (546 aa).

It belongs to the MQO family. FAD serves as cofactor.

The enzyme catalyses (S)-malate + a quinone = a quinol + oxaloacetate. It participates in carbohydrate metabolism; tricarboxylic acid cycle; oxaloacetate from (S)-malate (quinone route): step 1/1. In Acinetobacter baumannii (strain AB0057), this protein is Probable malate:quinone oxidoreductase.